The sequence spans 393 residues: NADH-quinone oxidoreductase subunit D (393 aa).

The protein belongs to the complex I 49 kDa subunit family. NDH-1 is composed of 14 different subunits. Subunits NuoB, C, D, E, F, and G constitute the peripheral sector of the complex.

It localises to the cell inner membrane. The catalysed reaction is a quinone + NADH + 5 H(+)(in) = a quinol + NAD(+) + 4 H(+)(out). Its function is as follows. NDH-1 shuttles electrons from NADH, via FMN and iron-sulfur (Fe-S) centers, to quinones in the respiratory chain. The immediate electron acceptor for the enzyme in this species is believed to be ubiquinone. Couples the redox reaction to proton translocation (for every two electrons transferred, four hydrogen ions are translocated across the cytoplasmic membrane), and thus conserves the redox energy in a proton gradient. The polypeptide is NADH-quinone oxidoreductase subunit D (Ehrlichia canis (strain Jake)).